Reading from the N-terminus, the 286-residue chain is Elongation factor Ts (286 aa).

The interval 82-85 (TDFV) is involved in Mg(2+) ion dislocation from EF-Tu. Residues 212–286 (VAAQTGQKVE…SPSKKGKKKK (75 aa)) are disordered. Positions 215–227 (QTGQKVEQPQAAQ) are enriched in polar residues. Low complexity predominate over residues 253 to 269 (ETDSPAAETTTEPPKTT).

Belongs to the EF-Ts family.

The protein resides in the cytoplasm. Its function is as follows. Associates with the EF-Tu.GDP complex and induces the exchange of GDP to GTP. It remains bound to the aminoacyl-tRNA.EF-Tu.GTP complex up to the GTP hydrolysis stage on the ribosome. This chain is Elongation factor Ts, found in Gloeothece citriformis (strain PCC 7424) (Cyanothece sp. (strain PCC 7424)).